Consider the following 322-residue polypeptide: MKISVIISNYNYARYLSRAINSVLAQTHSDIEIVIVDDGSTDNSRDVITQLQEQAPDKIKPIFQANQGQGGAFNAGFAAATGEVVAFLDADDVWKPHKLQRIVEVFQTSDVVGVMHHLDIIDGNDKTIDQASTQGPKLSEDLASVILQTGNAWCFPPTSGLAYRREVLEKVFPIDPVKWRIWADGCIIYCTAFLGKIKTLQENLAYYRIHGANNHMSAASATSEQEAKSQAGIEMTNQYINDFLVRIGYGARVDLSRNLQYRRTKYYQRSQWDLREVWGISRLILGWPFYSGQERAYYLARFLFKSGKFLLRSDVHTESTTI.

This sequence belongs to the glycosyltransferase 2 family.

This is an uncharacterized protein from Nostoc sp. (strain PCC 7120 / SAG 25.82 / UTEX 2576).